Consider the following 184-residue polypeptide: GTP cyclohydrolase 1 (184 aa).

Positions 75, 78, and 146 each coordinate Zn(2+).

It belongs to the GTP cyclohydrolase I family. In terms of assembly, homomer.

The enzyme catalyses GTP + H2O = 7,8-dihydroneopterin 3'-triphosphate + formate + H(+). Its pathway is cofactor biosynthesis; 7,8-dihydroneopterin triphosphate biosynthesis; 7,8-dihydroneopterin triphosphate from GTP: step 1/1. The protein is GTP cyclohydrolase 1 of Streptococcus pneumoniae serotype 19F (strain G54).